Here is a 192-residue protein sequence, read N- to C-terminus: MPENSRIVLASASPRRLELLASAGIEFDVFASDIPEEPIPGEAPADFSVRLAKDKAVATAARSEGRWFIGADTIVVCDGEIMGKPADGADAVRMLKKLSGVPHEVITGYAIYDKARDGILCKAVVTKVFFKPLRDEEITAYVATGCPMDKAGAYAIQGGAACMVERIDGSYTNVVGLPLCEVVEDLRTMGAL.

Asp72 functions as the Proton acceptor in the catalytic mechanism.

The protein belongs to the Maf family. YhdE subfamily. It depends on a divalent metal cation as a cofactor.

It localises to the cytoplasm. The enzyme catalyses dTTP + H2O = dTMP + diphosphate + H(+). It catalyses the reaction UTP + H2O = UMP + diphosphate + H(+). In terms of biological role, nucleoside triphosphate pyrophosphatase that hydrolyzes dTTP and UTP. May have a dual role in cell division arrest and in preventing the incorporation of modified nucleotides into cellular nucleic acids. This chain is dTTP/UTP pyrophosphatase, found in Geobacter metallireducens (strain ATCC 53774 / DSM 7210 / GS-15).